The primary structure comprises 181 residues: Inner membrane-spanning protein YciB (181 aa).

5 helical membrane-spanning segments follow: residues 10–30 (LVIFFAVYKFFDIYIASGALI), 50–70 (MHLITFAMVTVFGTLTLVFHD), 72–92 (AFIKWKVTIIYALFALALGIS), 118–138 (ITWYWVIFFATCGLVNIYVAF), and 148–168 (FKVFGLTALTLVNTVITVFYL).

The protein belongs to the YciB family.

Its subcellular location is the cell inner membrane. In terms of biological role, plays a role in cell envelope biogenesis, maintenance of cell envelope integrity and membrane homeostasis. This is Inner membrane-spanning protein YciB from Shewanella putrefaciens (strain CN-32 / ATCC BAA-453).